The chain runs to 314 residues: Dihydroorotate dehydrogenase (fumarate) (314 aa).

Substrate is bound by residues Lys46, 70 to 74, and Asn130; that span reads NSMGL. Residue 46 to 47 coordinates FMN; sequence KS. Asn130 serves as a coordination point for FMN. Catalysis depends on nucleophile residues Ser132 and Cys133. FMN is bound by residues Lys167 and Ile195. 196–197 lines the substrate pocket; sequence NS. Residues Gly224, 252–253, and 274–275 each bind FMN; these read GG and GT.

It belongs to the dihydroorotate dehydrogenase family. Type 1 subfamily. Homodimer. It depends on FMN as a cofactor.

It is found in the cytoplasm. It catalyses the reaction (S)-dihydroorotate + fumarate = orotate + succinate. Its pathway is pyrimidine metabolism; UMP biosynthesis via de novo pathway. Functionally, catalyzes the conversion of dihydroorotate to orotate with fumarate as the electron acceptor. This chain is Dihydroorotate dehydrogenase (fumarate) (URA1), found in Saccharomyces bayanus (Yeast).